Consider the following 440-residue polypeptide: WAS/WASL-interacting protein family member 2 (440 aa).

Pro residues predominate over residues 1–18 (MPIPPPPPPPPGPPPPPT). Residues 1–38 (MPIPPPPPPPPGPPPPPTFNQANTEQPKLSRDEQRNRG) form a disordered region. The region spanning 36–53 (NRGALLQDICKGTKLKKV) is the WH2 domain. Arg-37 carries the asymmetric dimethylarginine modification. Positions 49 to 52 (KLKK) are binds actin. Disordered regions lie at residues 56–386 (VNDR…RDSI) and 419–440 (RVYP…PILR). Over residues 116–132 (PSSRAAAPRPPGSAASG) the composition is skewed to low complexity. 4 stretches are compositionally biased toward pro residues: residues 176 to 193 (APPP…PTPL), 225 to 236 (PAPPPVKPPPSP), 249 to 262 (APPP…PGVP), and 356 to 378 (RGKP…PPPL).

The protein belongs to the verprolin family. In terms of assembly, interacts with WASL and WASP, and this interaction results in cytoplasmic relocation of these two proteins along actin filaments. Interacts with NCK2 resulting in the localization to sites of focal adhesions.

The protein resides in the cytoplasm. It is found in the cytoskeleton. In terms of biological role, plays an active role in the formation of cell surface protrusions downstream of activated PDGFB receptors. Plays an important role in actin-microspike formation through cooperation with WASL. May cooperate with WASP and WASL to induce mobilization and reorganization of the actin filament system. This is WAS/WASL-interacting protein family member 2 (Wipf2) from Mus musculus (Mouse).